Consider the following 111-residue polypeptide: Gene 21 protein (111 aa).

The protein is Gene 21 protein (21) of Mycobacterium (Mycobacteriophage L5).